Here is a 372-residue protein sequence, read N- to C-terminus: 4-hydroxy-3-methylbut-2-en-1-yl diphosphate synthase (flavodoxin) (372 aa).

[4Fe-4S] cluster contacts are provided by cysteine 270, cysteine 273, cysteine 305, and glutamate 312.

This sequence belongs to the IspG family. It depends on [4Fe-4S] cluster as a cofactor.

The enzyme catalyses (2E)-4-hydroxy-3-methylbut-2-enyl diphosphate + oxidized [flavodoxin] + H2O + 2 H(+) = 2-C-methyl-D-erythritol 2,4-cyclic diphosphate + reduced [flavodoxin]. The protein operates within isoprenoid biosynthesis; isopentenyl diphosphate biosynthesis via DXP pathway; isopentenyl diphosphate from 1-deoxy-D-xylulose 5-phosphate: step 5/6. In terms of biological role, converts 2C-methyl-D-erythritol 2,4-cyclodiphosphate (ME-2,4cPP) into 1-hydroxy-2-methyl-2-(E)-butenyl 4-diphosphate. This chain is 4-hydroxy-3-methylbut-2-en-1-yl diphosphate synthase (flavodoxin), found in Escherichia coli O8 (strain IAI1).